Consider the following 186-residue polypeptide: uncharacterized protein (186 aa).

4 consecutive transmembrane segments (helical) span residues 5 to 25 (LIAC…FEDI), 39 to 59 (IITI…KLFA), 62 to 82 (NLLF…ILLF), and 122 to 142 (GFFE…IALM).

Its subcellular location is the cell membrane. This is an uncharacterized protein from Borreliella burgdorferi (strain ATCC 35210 / DSM 4680 / CIP 102532 / B31) (Borrelia burgdorferi).